The sequence spans 165 residues: uncharacterized protein (165 aa).

The helical transmembrane segment at 15–35 (MSPAIILIGVLILIVLFVIKF) threads the bilayer. Positions 67–119 (ISQLNTLRATLAAKKKELKTLRTARKKECTEQLAKTQAEVDRIQAKIDNFSSR) form a coiled coil. The interval 123-156 (VPLPGGEVGPPYNPPPPRTNTRPNPRPNPRPAQL) is disordered. The segment covering 133–154 (PYNPPPPRTNTRPNPRPNPRPA) has biased composition (pro residues).

It localises to the membrane. This is an uncharacterized protein from Acheta domesticus (House cricket).